The chain runs to 176 residues: ATP-dependent protease subunit HslV (176 aa).

T2 is an active-site residue. Na(+)-binding residues include G157, C160, and T163.

Belongs to the peptidase T1B family. HslV subfamily. A double ring-shaped homohexamer of HslV is capped on each side by a ring-shaped HslU homohexamer. The assembly of the HslU/HslV complex is dependent on binding of ATP.

The protein localises to the cytoplasm. The catalysed reaction is ATP-dependent cleavage of peptide bonds with broad specificity.. Its activity is regulated as follows. Allosterically activated by HslU binding. Functionally, protease subunit of a proteasome-like degradation complex believed to be a general protein degrading machinery. This Escherichia coli O139:H28 (strain E24377A / ETEC) protein is ATP-dependent protease subunit HslV.